The following is an 82-amino-acid chain: NAD(P)H-quinone oxidoreductase subunit O, organellar chromatophore (82 aa).

It belongs to the complex I NdhO subunit family. NDH-1 can be composed of about 15 different subunits; different subcomplexes with different compositions have been identified which probably have different functions.

It localises to the plastid. Its subcellular location is the organellar chromatophore thylakoid membrane. The enzyme catalyses a plastoquinone + NADH + (n+1) H(+)(in) = a plastoquinol + NAD(+) + n H(+)(out). It catalyses the reaction a plastoquinone + NADPH + (n+1) H(+)(in) = a plastoquinol + NADP(+) + n H(+)(out). NDH-1 shuttles electrons from an unknown electron donor, via FMN and iron-sulfur (Fe-S) centers, to quinones in the respiratory and/or the photosynthetic chain. The immediate electron acceptor for the enzyme in this species is believed to be plastoquinone. Couples the redox reaction to proton translocation, and thus conserves the redox energy in a proton gradient. Cyanobacterial NDH-1 also plays a role in inorganic carbon-concentration. In Paulinella chromatophora, this protein is NAD(P)H-quinone oxidoreductase subunit O, organellar chromatophore.